Consider the following 359-residue polypeptide: Serpentine receptor class epsilon-26 (359 aa).

The next 7 membrane-spanning stretches (helical) occupy residues 29 to 49 (CAISSAELPFYMLSAYVVFVS), 66 to 86 (IGVPMFGSWFLLIAGKLITIL), 127 to 147 (VAGFLEIHFGFSVIFVGLAIV), 172 to 192 (FIIIYQFLAISISLGILFNIL), 195 to 215 (YVLNASWILCILIGTIMYYYI), 256 to 276 (LVFVVLATIVVMGFGIVALVL), and 282 to 302 (FFMHFGENTLFCYPLYIFLVV).

The protein belongs to the nematode receptor-like protein sre family.

It is found in the membrane. The polypeptide is Serpentine receptor class epsilon-26 (sre-26) (Caenorhabditis elegans).